Reading from the N-terminus, the 30-residue chain is Photosystem I reaction center subunit XII (30 aa).

The chain crosses the membrane as a helical span at residues 7-29; that stretch reads VYTVLLIALLASVLAIRLGSTLY.

It belongs to the PsaM family.

The protein resides in the plastid. It is found in the chloroplast thylakoid membrane. This Trieres chinensis (Marine centric diatom) protein is Photosystem I reaction center subunit XII.